The chain runs to 186 residues: Pyridoxal 5'-phosphate synthase subunit PdxT (186 aa).

L-glutamine is bound at residue 46–48 (GES). The active-site Nucleophile is the C75. L-glutamine contacts are provided by residues R101 and 128-129 (IR). Active-site charge relay system residues include H165 and E167.

It belongs to the glutaminase PdxT/SNO family. In the presence of PdxS, forms a dodecamer of heterodimers. Only shows activity in the heterodimer.

It carries out the reaction aldehydo-D-ribose 5-phosphate + D-glyceraldehyde 3-phosphate + L-glutamine = pyridoxal 5'-phosphate + L-glutamate + phosphate + 3 H2O + H(+). The enzyme catalyses L-glutamine + H2O = L-glutamate + NH4(+). Its pathway is cofactor biosynthesis; pyridoxal 5'-phosphate biosynthesis. In terms of biological role, catalyzes the hydrolysis of glutamine to glutamate and ammonia as part of the biosynthesis of pyridoxal 5'-phosphate. The resulting ammonia molecule is channeled to the active site of PdxS. The chain is Pyridoxal 5'-phosphate synthase subunit PdxT from Methanocaldococcus jannaschii (strain ATCC 43067 / DSM 2661 / JAL-1 / JCM 10045 / NBRC 100440) (Methanococcus jannaschii).